The sequence spans 1436 residues: MAYGEPYYSSKPDKDFNFGSTMARRQMTPTMVTKLPKFVRNSPQAYDWIVRGLIFPTIGKTYFQRVVVITGGLEDGTYGSFAFDGKEWVGIYPIEHLNLMSSLKLIHKANALQERLRLSQEEKATLALDVQFLQHENVRLKEMIPKPEPRKIQMKWIIMGAVLTFLSLIPGGYAHSQTNNTIFTDMIAACKYSTETLTENLDLRIKLALANITISDKLDAVRQILNFAFVPRAHWLRTVFYYIHYYEMWNIFMFVLAIGTVMRSARPGTDLVTLATSHLSGFRMAVLPTIPFHTTMTLWVMNTLMVCYYFDNLLAITLAILAPILGIIFLCFMEDSNYVSQIRGLIATAVLIAGGHACLTLTGTTTSLFVVILTCRFIRMATVFIGTRFEIRDANGKVVATVPTRIKNVAFDFFQKLKQSGVRVGVNEFVVIKPGALCVIDTPEGKGTGFFSGNDIVTAAHVVGNNTFVNVCYEGLMYEAKVRYMPEKDIAFLTCPGDLHPTARLKLSKNPDYSCVTVMAYVNEDLVVSTAAAMVHGNTLSYAVRTQDGMSGAPVCDKYGRVLAVHQTNTGYTGGAVIIDPADFHPVKAPSQVELLKEEIERLKAQLNSATENATTVVTQQPSAALEQKSVSDSDVVDLVRTAMEREMKVLRDEINGILAPFLQKKKGKTKHGRGRVRRNLRKGVKLLTEEEYRELLEKGLDRETFLDLIDRIIGERSGYPDYDDEDYYDEDDDGWGMVGDDVEFDYTEVINFDQAKPIPAPRTTKQKICPEPEVESQPLDLSQKKEKQSEYEQQVVKSTKPQQLEHEQQVVKPIKPQKSEPQPYSQTYGKAPIWESYDFDWDEDDAKFILPAPHRLTKADEIVLGSKIVKLRTIIETAIKTQNYSALPEAVFELDKAAYEAGLEGFLQRVKSKNKAPEKQGPKKLQRAPEDQGAQNYHSLDAWKLLLEPPRERRCVPANFPLLGHLPINRPIFDDKKPRDDLLGLLPEPTWHAFEEYGPTTWGPQAFIKSFDKFFYAEPIDFFSEYPQLCAFADWATYREFRYLEDTRVIHITATEKNTDSTPAYPKMNYFDTEENYLEAHGWAPYIREFTRVYKGDKPEVLWYLFLKKEIIKEEKIRNSDIRQIVCADPIYTRIGACLEAHQNALMKQHTDTSVGQCGWSPMEGGFKKTMQRLVNKGNKHFIEFDWTRYDGTIPPALFKHIKEIRWNFINKDQREKYRHVHEWYVNNLLNRHVLLPSGEVTLQTRGNPSGQFSTTMDNNMVNFWLQAFEFAYFNGPDRDLWKTYDTVVYGDDRLSTTPSVPDDYEERVITMYRDIFGMWVKPGKVICRDSIVGLSFCGFTVNENLEPVPTSPEKLMASLLKPYKILPDLESLHGKLLCYQLLAAFMAEDHPFKVYVEHCLSRTAKQLRDSGLPARLTEEQLHRIWRGGPKKCDG.

Residues 104 to 142 (KLIHKANALQERLRLSQEEKATLALDVQFLQHENVRLKE) adopt a coiled-coil conformation. Helical transmembrane passes span 156–176 (WIIM…YAHS), 239–259 (VFYY…LAIG), 286–306 (VLPT…TLMV), 313–333 (LLAI…LCFM), and 344–364 (GLIA…LTGT). Residues His-461, Asp-489, and Ser-551 each act as charge relay system; for serine protease activity in the active site. Positions 587 to 620 (VKAPSQVELLKEEIERLKAQLNSATENATTVVTQ) form a coiled coil. Residue Tyr-693 is modified to O-(5'-phospho-RNA)-tyrosine. Disordered stretches follow at residues 756–828 (AKPI…YSQT) and 913–934 (SKNK…EDQG). The 127-residue stretch at 1181–1307 (KHFIEFDWTR…TTPSVPDDYE (127 aa)) folds into the RdRp catalytic domain.

Belongs to the astroviridae polyprotein 1AB family. Monomer. In terms of processing, cleaved by the viral and host proteases. The protease is probably autocatalytically cleaved.

It localises to the host membrane. The catalysed reaction is RNA(n) + a ribonucleoside 5'-triphosphate = RNA(n+1) + diphosphate. Functionally, responsible for the cleavage of the polyprotein into functional products. In terms of biological role, protein covalently attached to the 5' extremity of the genomic and subgenomic RNAs. It may serve as a primer for the replicase. The chain is Non-structural polyprotein 1AB (ORF1) from Homo sapiens (Human).